The following is a 135-amino-acid chain: Methylglyoxal synthase (135 aa).

An MGS-like domain is found at 1–135 (MQKTLALVAH…GLYERAVPEF (135 aa)). Substrate-binding positions include histidine 10, lysine 14, 36-39 (TGTT), and 56-57 (SG). Aspartate 62 serves as the catalytic Proton donor/acceptor. Histidine 89 serves as a coordination point for substrate.

This sequence belongs to the methylglyoxal synthase family.

It catalyses the reaction dihydroxyacetone phosphate = methylglyoxal + phosphate. Catalyzes the formation of methylglyoxal from dihydroxyacetone phosphate. This chain is Methylglyoxal synthase, found in Pseudoalteromonas atlantica (strain T6c / ATCC BAA-1087).